We begin with the raw amino-acid sequence, 100 residues long: MYLTTKEKEKLMISVVAEIARKRQARGLKLNYPEAVAIITDAILEGARDGKLVKDLMSYGRTILKREDVMEGVPEMIEMVQVEATFLDGTKLVTVHNPIQ.

This sequence belongs to the urease gamma subunit family. As to quaternary structure, heterotrimer of UreA (gamma), UreB (beta) and UreC (alpha) subunits. Three heterotrimers associate to form the active enzyme.

The protein localises to the cytoplasm. It carries out the reaction urea + 2 H2O + H(+) = hydrogencarbonate + 2 NH4(+). Its pathway is nitrogen metabolism; urea degradation; CO(2) and NH(3) from urea (urease route): step 1/1. This Clostridium perfringens protein is Urease subunit gamma.